A 159-amino-acid chain; its full sequence is SsrA-binding protein (159 aa).

The protein belongs to the SmpB family.

It localises to the cytoplasm. In terms of biological role, required for rescue of stalled ribosomes mediated by trans-translation. Binds to transfer-messenger RNA (tmRNA), required for stable association of tmRNA with ribosomes. tmRNA and SmpB together mimic tRNA shape, replacing the anticodon stem-loop with SmpB. tmRNA is encoded by the ssrA gene; the 2 termini fold to resemble tRNA(Ala) and it encodes a 'tag peptide', a short internal open reading frame. During trans-translation Ala-aminoacylated tmRNA acts like a tRNA, entering the A-site of stalled ribosomes, displacing the stalled mRNA. The ribosome then switches to translate the ORF on the tmRNA; the nascent peptide is terminated with the 'tag peptide' encoded by the tmRNA and targeted for degradation. The ribosome is freed to recommence translation, which seems to be the essential function of trans-translation. The sequence is that of SsrA-binding protein from Frankia casuarinae (strain DSM 45818 / CECT 9043 / HFP020203 / CcI3).